Reading from the N-terminus, the 341-residue chain is Shk1 kinase-binding protein 15 (341 aa).

WD repeat units follow at residues 33–70, 77–114, 119–157, 197–234, and 237–274; these read AHEG…QIAD, IANA…LVHT, SHKG…GGKV, SSKS…ILHE, and AHKK…VIEH. A disordered region spans residues 293 to 341; it reads NSEPKNVEDEAAKRQSLDSETSETSSESESESEYYSTSKQPPVKRTKHA. Over residues 297–309 the composition is skewed to basic and acidic residues; sequence KNVEDEAAKRQSL.

In terms of biological role, negatively regulates pak1/shk1 kinase activity leading to proper execution of cytoskeletal remodeling and cytokinetic functions. Functionally, interacts with pak1/shk1. In Schizosaccharomyces pombe (strain 972 / ATCC 24843) (Fission yeast), this protein is Shk1 kinase-binding protein 15 (skb15).